Reading from the N-terminus, the 152-residue chain is Ribosome maturation factor RimP (152 aa).

This sequence belongs to the RimP family.

The protein localises to the cytoplasm. Required for maturation of 30S ribosomal subunits. The sequence is that of Ribosome maturation factor RimP from Desulfitobacterium hafniense (strain DSM 10664 / DCB-2).